Reading from the N-terminus, the 422-residue chain is MLDYKFIKENVEAVKQNIKNRHMNADADKAVELYDKRTALVTSLQNLQKDRNDNSQSMKQKLSPEERQKLVDQGKAIKEKIAQVEAELAEAEKALHEAVSKIPNMAHPEAPVGKEDSDNLEVKRCGTVPKFDFEPKDHVQLGQDLDLIDFEAGTKVSGVKFYFLKNEAVFLEQALTMYGLNILRKHGFKPFITPDIAKEEILYGIGFNPRGEESNVYSLEGEGTCLVATAEITLGGYHSDEIIKKESLPLKYCGLSHCFRREAGAAGQFSKGLYRVHQFSKLEMFVYCTPEESDALHEELRLIEEEIFNGLGIPFRVVDTCTGDLGAPAYRKWDLEAWMPGRNGGEWGEVTSTSNCTDYQARRLNIRYKDDDGKNKFLHTLNGTALAMSRAMIAVLENYQQADGSIKIPEALVPYCGFDRIG.

An L-serine-binding site is contributed by 229–231; that stretch reads TAE. Residues 260–262 and Val276 each bind ATP; that span reads RRE. Glu283 lines the L-serine pocket. Residue 349–352 participates in ATP binding; sequence EVTS. Position 384 (Thr384) interacts with L-serine.

The protein belongs to the class-II aminoacyl-tRNA synthetase family. Type-1 seryl-tRNA synthetase subfamily. In terms of assembly, homodimer. The tRNA molecule binds across the dimer.

The protein resides in the cytoplasm. It catalyses the reaction tRNA(Ser) + L-serine + ATP = L-seryl-tRNA(Ser) + AMP + diphosphate + H(+). The catalysed reaction is tRNA(Sec) + L-serine + ATP = L-seryl-tRNA(Sec) + AMP + diphosphate + H(+). It functions in the pathway aminoacyl-tRNA biosynthesis; selenocysteinyl-tRNA(Sec) biosynthesis; L-seryl-tRNA(Sec) from L-serine and tRNA(Sec): step 1/1. In terms of biological role, catalyzes the attachment of serine to tRNA(Ser). Is also able to aminoacylate tRNA(Sec) with serine, to form the misacylated tRNA L-seryl-tRNA(Sec), which will be further converted into selenocysteinyl-tRNA(Sec). The chain is Serine--tRNA ligase from Treponema denticola (strain ATCC 35405 / DSM 14222 / CIP 103919 / JCM 8153 / KCTC 15104).